We begin with the raw amino-acid sequence, 685 residues long: Mannan-binding lectin serine protease 2 (685 aa).

The first 19 residues, 1 to 19 (MRLLIVLGLLWSLVATLLG), serve as a signal peptide directing secretion. The 118-residue stretch at 20–137 (SKWPEPVFGR…TGFEAFYAAE (118 aa)) folds into the CUB 1 domain. Positions 67 and 75 each coordinate Ca(2+). Cys72 and Cys90 are joined by a disulfide. A glycan (N-linked (GlcNAc...) asparagine) is linked at Asn103. Ca(2+) is bound by residues Asp120, Ser122, Asn123, Asp138, and Val139. Residues 138-181 (DVDECRTSLGDSVPCDHYCHNYLGGYYCSCRVGYILHQNKHTCS) form the EGF-like; calcium-binding domain. 4 disulfide bridges follow: Cys152-Cys165, Cys167-Cys180, Cys184-Cys211, and Cys241-Cys259. Residue Asn158 is modified to (3R)-3-hydroxyasparagine. 2 residues coordinate Ca(2+): Tyr159 and Gly162. One can recognise a CUB 2 domain in the interval 184–296 (CSGQVFTGRS…TGWKIHYTST (113 aa)). The N-linked (GlcNAc...) asparagine glycan is linked to Asn285. Sushi domains lie at 298–363 (QPCP…ECSI) and 364–431 (IDCG…VCKP). Cystine bridges form between Cys300–Cys348, Cys328–Cys361, Cys366–Cys411, Cys396–Cys429, Cys433–Cys551, Cys597–Cys617, and Cys628–Cys659. The Peptidase S1 domain occupies 444–683 (IIGGQPAKPG…YIPWIENIIN (240 aa)). Residues His482 and Asp531 each act as charge relay system in the active site. The active-site Charge relay system is Ser632. Asn641 carries an N-linked (GlcNAc...) asparagine glycan.

The protein belongs to the peptidase S1 family. Homodimer; disulfide-linked. Binds MBL2. Isoform 2 binds to MASP1. Binds SERPING1. Post-translationally, N-glycosylated. In terms of processing, the iron and 2-oxoglutarate dependent 3-hydroxylation of aspartate and asparagine is (R) stereospecific within EGF domains. As to expression, highly expressed in liver. Secreted in plasma.

It localises to the secreted. The catalysed reaction is Selective cleavage after Arg-223 in complement component C2 (-Ser-Leu-Gly-Arg-|-Lys-Ile-Gln-Ile) and after Arg-76 in complement component C4 (-Gly-Leu-Gln-Arg-|-Ala-Leu-Glu-Ile).. Its function is as follows. Serum protease that plays an important role in the activation of the complement system via mannose-binding lectin. After activation by auto-catalytic cleavage it cleaves C2 and C4, leading to their activation and to the formation of C3 convertase. In Rattus norvegicus (Rat), this protein is Mannan-binding lectin serine protease 2 (Masp2).